The primary structure comprises 259 residues: MASPQGGQIAIAMRLRNQLQSVYKMDPLRNEEEVRVKIKDLNEHIVCCLCAGYFVDATTITECLHTFCKSCIVKYLQTSKYCPMCNIKIHETQPLLNHKLDRVMQDIVYKLVPGLQDSEEKRIREFYQSRGLDRVTQPSGEEPALSNLGLPFSSFDHSKAHYYRYDEQLSLCLERLSSGKDKNKSILQNKYVRCSVRAEVRHLRRVLCHRLMLNPQHVQLLFDNEVLPDHMTMKQIWLSHWFGKPSPLLLQYSVKEKRR.

An N-acetylalanine modification is found at Ala-2. Ser-3 carries the post-translational modification Phosphoserine. Residue Lys-24 forms a Glycyl lysine isopeptide (Lys-Gly) (interchain with G-Cter in SUMO2) linkage. The RING-type zinc-finger motif lies at 47-86 (CCLCAGYFVDATTITECLHTFCKSCIVKYLQTSKYCPMCN). The tract at residues 86 to 247 (NIKIHETQPL…LSHWFGKPSP (162 aa)) is necessary for repressor activity. Residue Lys-88 forms a Glycyl lysine isopeptide (Lys-Gly) (interchain with G-Cter in SUMO2) linkage. The tract at residues 150–255 (LPFSSFDHSK…SPLLLQYSVK (106 aa)) is required for the interaction with the KDM2B-SKP1 heterodimeric complex. The RING-finger and WD40-associated ubiquitin-like domain (RAWUL); sufficient for interaction with BCOR and BCORL1 stretch occupies residues 167–255 (EQLSLCLERL…SPLLLQYSVK (89 aa)).

As to quaternary structure, interacts with BCORL1, forming heterodimers. The PCGF1-BCORL1 heterodimeric complex interacts with the KDM2B-SKP1 heterodimeric complex to form a homotetrameric polycomb repression complex 1 (PRC1.1). Component of the repressive BCOR complex containing a Polycomb group subcomplex at least composed of RYBP, RING1 and RNF2/RING2. Specifically interacts with BCOR, RING1 and RNF2/RING2. Component of a PRC1-like complex. Interacts with CBX6, CBX7 and CBX8. Interacts with DPPA4, NANOG, POU5F1 and RYBP.

Its subcellular location is the nucleus. Its function is as follows. Component of the Polycomb group (PcG) multiprotein BCOR complex, a complex required to maintain the transcriptionally repressive state of some genes, such as BCL6 and the cyclin-dependent kinase inhibitor, CDKN1A. Transcriptional repressor that may be targeted to the DNA by BCL6; this transcription repressor activity may be related to PKC signaling pathway. Represses CDKN1A expression by binding to its promoter, and this repression is dependent on the retinoic acid response element (RARE element). Promotes cell cycle progression and enhances cell proliferation as well. May have a positive role in tumor cell growth by down-regulating CDKN1A. Component of a Polycomb group (PcG) multiprotein PRC1-like complex, a complex class required to maintain the transcriptionally repressive state of many genes, including Hox genes, throughout development. PcG PRC1 complex acts via chromatin remodeling and modification of histones; it mediates monoubiquitination of histone H2A 'Lys-119', rendering chromatin heritably changed in its expressibility. Within the PRC1-like complex, regulates RNF2 ubiquitin ligase activity. Regulates the expression of DPPA4 and NANOG in the NT2 embryonic carcinoma cells. The protein is Polycomb group RING finger protein 1 (PCGF1) of Bos taurus (Bovine).